Consider the following 94-residue polypeptide: Small ribosomal subunit protein bS18 (94 aa).

It belongs to the bacterial ribosomal protein bS18 family. As to quaternary structure, part of the 30S ribosomal subunit. Forms a tight heterodimer with protein bS6.

Binds as a heterodimer with protein bS6 to the central domain of the 16S rRNA, where it helps stabilize the platform of the 30S subunit. The chain is Small ribosomal subunit protein bS18 from Polaromonas sp. (strain JS666 / ATCC BAA-500).